The following is a 435-amino-acid chain: Mitochondrial association factor 1 form a1 (435 aa).

The signal sequence occupies residues 1 to 20 (MWRIWRCRLSFLFATGCLLG). Topologically, residues 21–95 (ALTAGLGSQM…SVTARRRRNR (75 aa)) are vacuolar. Residues 43–88 (GVADASQEAGDVVEERTERTEEQVFAPGPPRRHSSESLFPRNASVT) are disordered. Residues 55 to 64 (VEERTERTEE) are compositionally biased toward basic and acidic residues. Residues 96–116 (RIAPIATAVGVAVILAALYVL) traverse the membrane as a helical segment. Residues 117 to 435 (RRRRAQPPQE…ERKYKFPQGD (319 aa)) are Cytoplasmic-facing. Positions 120–162 (RAQPPQEPEPPTRLRTPRPRAPSEQQQPSESEPPAEVPMTPDP) are disordered. Low complexity predominate over residues 141-153 (PSEQQQPSESEPP).

In terms of assembly, interacts with host SAMM50.

The protein resides in the parasitophorous vacuole membrane. Functionally, during host cell infection by tachyzoites, does not play a role in tethering the parasitophorous vacuole to the host mitochondria, probably because it does not bind host mitochondrial import protein TOMM70. The polypeptide is Mitochondrial association factor 1 form a1 (Toxoplasma gondii).